The sequence spans 654 residues: Probable protein phosphatase 2C 23 (654 aa).

Residues 11 to 30 (CLTGGAGRNKKPELSILEPD) form a disordered region. Residue Ser147 is modified to Phosphoserine. In terms of domain architecture, PPM-type phosphatase spans 243–645 (DVSLESQNLQ…DDVSIVVISL (403 aa)). Residues Asp280 and Gly281 each coordinate Mn(2+). The interval 309 to 336 (DDPKTDAKSSDEADVENRDSSSEKKSKN) is disordered. Mn(2+) contacts are provided by Asp573 and Asp636.

It belongs to the PP2C family. Mg(2+) is required as a cofactor. Mn(2+) serves as cofactor. As to expression, expressed in seedlings, roots, leaves, stems, young inflorescences, flowers and siliques.

It is found in the nucleus. The catalysed reaction is O-phospho-L-seryl-[protein] + H2O = L-seryl-[protein] + phosphate. It catalyses the reaction O-phospho-L-threonyl-[protein] + H2O = L-threonyl-[protein] + phosphate. Its function is as follows. Involved in leaf development regulation. This Arabidopsis thaliana (Mouse-ear cress) protein is Probable protein phosphatase 2C 23 (PLL4).